A 393-amino-acid polypeptide reads, in one-letter code: tRNA-specific 2-thiouridylase MnmA (393 aa).

ATP contacts are provided by residues 19 to 26 (AMSGGVDS) and leucine 45. Catalysis depends on cysteine 113, which acts as the Nucleophile. An intrachain disulfide couples cysteine 113 to cysteine 210. Residue glycine 137 participates in ATP binding. Residues 160–162 (RDQ) are interaction with tRNA. The Cysteine persulfide intermediate role is filled by cysteine 210.

This sequence belongs to the MnmA/TRMU family.

It localises to the cytoplasm. The enzyme catalyses S-sulfanyl-L-cysteinyl-[protein] + uridine(34) in tRNA + AH2 + ATP = 2-thiouridine(34) in tRNA + L-cysteinyl-[protein] + A + AMP + diphosphate + H(+). Functionally, catalyzes the 2-thiolation of uridine at the wobble position (U34) of tRNA, leading to the formation of s(2)U34. This Bradyrhizobium diazoefficiens (strain JCM 10833 / BCRC 13528 / IAM 13628 / NBRC 14792 / USDA 110) protein is tRNA-specific 2-thiouridylase MnmA.